The sequence spans 272 residues: Ribonuclease 3 (272 aa).

Residues 1-22 (MSLQFLRSEASDGAGETSDASS) form a disordered region. The RNase III domain occupies 31-162 (TATHLARLTG…LVGAIYLDQG (132 aa)). Glutamate 75 contacts Mg(2+). Residue aspartate 79 is part of the active site. Mg(2+) contacts are provided by aspartate 148 and glutamate 151. Glutamate 151 is an active-site residue. The DRBM domain occupies 189–258 (NYKSRLIEYT…AKEAMKRLES (70 aa)).

This sequence belongs to the ribonuclease III family. In terms of assembly, homodimer. Mg(2+) serves as cofactor.

It is found in the cytoplasm. The enzyme catalyses Endonucleolytic cleavage to 5'-phosphomonoester.. Digests double-stranded RNA. Involved in the processing of primary rRNA transcript to yield the immediate precursors to the large and small rRNAs (23S and 16S). Processes some mRNAs, and tRNAs when they are encoded in the rRNA operon. Processes pre-crRNA and tracrRNA of type II CRISPR loci if present in the organism. This Chlorobaculum tepidum (strain ATCC 49652 / DSM 12025 / NBRC 103806 / TLS) (Chlorobium tepidum) protein is Ribonuclease 3.